We begin with the raw amino-acid sequence, 467 residues long: Receptor-like cytosolic serine/threonine-protein kinase RBK1 (467 aa).

Over residues Met-1–Leu-24 the composition is skewed to basic and acidic residues. The segment at Met-1–Ser-73 is disordered. Over residues Ser-40–Thr-71 the composition is skewed to low complexity. Thr-142 bears the Phosphothreonine mark. The 278-residue stretch at Phe-153–Leu-430 folds into the Protein kinase domain. ATP contacts are provided by residues Ile-159–Val-167 and Lys-181. Catalysis depends on Asp-278, which acts as the Proton acceptor. Ser-282 carries the phosphoserine modification. The residue at position 318 (Thr-318) is a Phosphothreonine. Tyr-326 carries the phosphotyrosine modification.

Belongs to the protein kinase superfamily. Ser/Thr protein kinase family. Interacts with ARAC5 and ARAC10. As to expression, mostly expressed in vasculature, hydathode endothem, leaf mesophyll cells and trichomes.

Its subcellular location is the cytoplasm. The protein resides in the endomembrane system. It localises to the nucleus. It carries out the reaction L-seryl-[protein] + ATP = O-phospho-L-seryl-[protein] + ADP + H(+). It catalyses the reaction L-threonyl-[protein] + ATP = O-phospho-L-threonyl-[protein] + ADP + H(+). The protein is Receptor-like cytosolic serine/threonine-protein kinase RBK1 (RBK1) of Arabidopsis thaliana (Mouse-ear cress).